The following is a 437-amino-acid chain: Trypacidin cluster transcriptional coactivator tpcD (437 aa).

An HTH iclR-type domain is found at 75–144 (LAVQSQLLSC…PQRGHVAHSP (70 aa)). The H-T-H motif DNA-binding region spans 105 to 124 (IADLARLSGVPEAQLARIIR).

As to expression, specifically expressed in conidia.

It localises to the nucleus. Transcriptional coactivator; part of the gene cluster that mediates the biosynthesis of trypacidin, a mycotoxin with antiprotozoal activity and that plays a role in the infection process. With tpcE, coregulates the production of trypacidin. This chain is Trypacidin cluster transcriptional coactivator tpcD, found in Aspergillus fumigatus (strain ATCC MYA-4609 / CBS 101355 / FGSC A1100 / Af293) (Neosartorya fumigata).